Reading from the N-terminus, the 344-residue chain is L-rhamnose-proton symporter (344 aa).

10 helical membrane-spanning segments follow: residues Ala4–Ala24, Trp38–Leu58, Phe68–Ile88, Met101–Ile121, Thr137–Leu157, Leu175–Ala195, Leu214–Val234, Ile259–Gly279, Ile290–Leu310, and Val323–Ala343.

This sequence belongs to the L-rhamnose transporter (TC 2.A.7.6) family.

It is found in the cell inner membrane. The enzyme catalyses L-rhamnopyranose(in) + H(+)(in) = L-rhamnopyranose(out) + H(+)(out). Uptake of L-rhamnose across the cytoplasmic membrane with the concomitant transport of protons into the cell (symport system). The chain is L-rhamnose-proton symporter from Citrobacter koseri (strain ATCC BAA-895 / CDC 4225-83 / SGSC4696).